The primary structure comprises 323 residues: HTH-type transcriptional activator CmpR (323 aa).

The HTH lysR-type domain maps to 4-61 (LTLHQLKVFEAAARHSSFTRAAEELYLTQPTVSIQVKQLTKAVGLPLFEQIGKRLYLT). The segment at residues 21–40 (FTRAAEELYLTQPTVSIQVK) is a DNA-binding region (H-T-H motif). Positions 304-323 (IPESTTTDPELDAPQPVVGV) are disordered.

The protein belongs to the LysR transcriptional regulatory family.

The protein localises to the cytoplasm. Activates transcription of the cmpABCD operon under carbon dioxide-limited conditions. This Synechococcus elongatus (strain ATCC 33912 / PCC 7942 / FACHB-805) (Anacystis nidulans R2) protein is HTH-type transcriptional activator CmpR (cmpR).